We begin with the raw amino-acid sequence, 136 residues long: Large ribosomal subunit protein uL16 (136 aa).

It belongs to the universal ribosomal protein uL16 family. As to quaternary structure, part of the 50S ribosomal subunit.

Its function is as follows. Binds 23S rRNA and is also seen to make contacts with the A and possibly P site tRNAs. In Actinobacillus succinogenes (strain ATCC 55618 / DSM 22257 / CCUG 43843 / 130Z), this protein is Large ribosomal subunit protein uL16.